Consider the following 67-residue polypeptide: ATP synthase F(0) complex subunit 8 (67 aa).

The chain crosses the membrane as a helical span at residues 8–24; sequence TWLIMISSMILTLFITF. K54 carries the post-translational modification N6-acetyllysine; alternate. K54 carries the post-translational modification N6-succinyllysine; alternate. K57 is modified (N6-acetyllysine).

The protein belongs to the ATPase protein 8 family. As to quaternary structure, component of the ATP synthase complex composed at least of ATP5F1A/subunit alpha, ATP5F1B/subunit beta, ATP5MC1/subunit c (homooctomer), MT-ATP6/subunit a, MT-ATP8/subunit 8, ATP5ME/subunit e, ATP5MF/subunit f, ATP5MG/subunit g, ATP5MK/subunit k, ATP5MJ/subunit j, ATP5F1C/subunit gamma, ATP5F1D/subunit delta, ATP5F1E/subunit epsilon, ATP5PF/subunit F6, ATP5PB/subunit b, ATP5PD/subunit d, ATP5PO/subunit OSCP. ATP synthase complex consists of a soluble F(1) head domain (subunits alpha(3) and beta(3)) - the catalytic core - and a membrane F(0) domain - the membrane proton channel (subunits c, a, 8, e, f, g, k and j). These two domains are linked by a central stalk (subunits gamma, delta, and epsilon) rotating inside the F1 region and a stationary peripheral stalk (subunits F6, b, d, and OSCP). Interacts with PRICKLE3.

The protein localises to the mitochondrion membrane. In terms of biological role, subunit 8, of the mitochondrial membrane ATP synthase complex (F(1)F(0) ATP synthase or Complex V) that produces ATP from ADP in the presence of a proton gradient across the membrane which is generated by electron transport complexes of the respiratory chain. ATP synthase complex consist of a soluble F(1) head domain - the catalytic core - and a membrane F(1) domain - the membrane proton channel. These two domains are linked by a central stalk rotating inside the F(1) region and a stationary peripheral stalk. During catalysis, ATP synthesis in the catalytic domain of F(1) is coupled via a rotary mechanism of the central stalk subunits to proton translocation. In vivo, can only synthesize ATP although its ATP hydrolase activity can be activated artificially in vitro. Part of the complex F(0) domain. This chain is ATP synthase F(0) complex subunit 8, found in Halichoerus grypus (Gray seal).